Here is an 80-residue protein sequence, read N- to C-terminus: Metallothionein-like protein type 2, MT2-4/MT2-25 (80 aa).

It belongs to the metallothionein superfamily. Type 15 family.

In terms of biological role, metallothioneins have a high content of cysteine residues that bind various heavy metals. The protein is Metallothionein-like protein type 2, MT2-4/MT2-25 of Brassica juncea (Indian mustard).